Reading from the N-terminus, the 37-residue chain is Chitinase-like protein (37 aa).

The interval 1–20 (VLLSVGGDADTESPEKKNLG) is disordered. In terms of domain architecture, GH18 spans 1 to 37 (VLLSVGGDADTESPEKKNLGGVSIVDLSMDDFRGLLT).

It belongs to the glycosyl hydrolase 18 family. IDGF subfamily. Post-translationally, glycosylated.

The protein resides in the secreted. Cooperates with insulin-like peptides to stimulate the proliferation, polarization and motility of imaginal disk cells. May act by stabilizing the binding of insulin-like peptides to its receptor through a simultaneous interaction with both molecules to form a multiprotein signaling complex. The sequence is that of Chitinase-like protein from Heliothis virescens (Tobacco budworm moth).